A 253-amino-acid chain; its full sequence is MDAAGGDQLSLAAVRDALVRLEDSVVFALIERARHPRNAPAYAPAATAGEHSLVEFFVREAEALNAKAGHYQKPEDVPFFPQDLPSPLFPTKPSPKVLHPFASLVTVNDAIWKMYFDELLPLFTVDGDDGSYAQTVALDLACLQVLSQRIHIGKYVAEVKFKDAPQEYSRLIKEKDSNSLMDMLTFKAVEEKVKKRVEKKARTFGQNVTLDDNATAGDSECKVDPKVLSKLYDQWVMPLTKDVEVEYLLRRLD.

The 252-residue stretch at 2-253 (DAAGGDQLSL…EVEYLLRRLD (252 aa)) folds into the Chorismate mutase domain.

In terms of assembly, homodimer. Interacts with Cmu1 of the fungal pathogen Ustilago maydis.

Its subcellular location is the cytoplasm. The protein resides in the cytosol. The enzyme catalyses chorismate = prephenate. It functions in the pathway metabolic intermediate biosynthesis; prephenate biosynthesis; prephenate from chorismate: step 1/1. With respect to regulation, no allosteric regulation. The sequence is that of Chorismate mutase 2, cytosolic from Zea mays (Maize).